The sequence spans 288 residues: Bifunctional protein FolD (288 aa).

NADP(+) contacts are provided by residues 164–166 and I230; that span reads GTS.

It belongs to the tetrahydrofolate dehydrogenase/cyclohydrolase family. In terms of assembly, homodimer.

The catalysed reaction is (6R)-5,10-methylene-5,6,7,8-tetrahydrofolate + NADP(+) = (6R)-5,10-methenyltetrahydrofolate + NADPH. The enzyme catalyses (6R)-5,10-methenyltetrahydrofolate + H2O = (6R)-10-formyltetrahydrofolate + H(+). The protein operates within one-carbon metabolism; tetrahydrofolate interconversion. Functionally, catalyzes the oxidation of 5,10-methylenetetrahydrofolate to 5,10-methenyltetrahydrofolate and then the hydrolysis of 5,10-methenyltetrahydrofolate to 10-formyltetrahydrofolate. The chain is Bifunctional protein FolD from Mycoplasma mycoides subsp. mycoides SC (strain CCUG 32753 / NCTC 10114 / PG1).